A 176-amino-acid polypeptide reads, in one-letter code: 3-hydroxydecanoyl-[acyl-carrier-protein] dehydratase (176 aa).

His75 is an active-site residue.

The protein belongs to the thioester dehydratase family. FabA subfamily. In terms of assembly, homodimer.

It localises to the cytoplasm. The catalysed reaction is a (3R)-hydroxyacyl-[ACP] = a (2E)-enoyl-[ACP] + H2O. The enzyme catalyses (3R)-hydroxydecanoyl-[ACP] = (2E)-decenoyl-[ACP] + H2O. It catalyses the reaction (2E)-decenoyl-[ACP] = (3Z)-decenoyl-[ACP]. It participates in lipid metabolism; fatty acid biosynthesis. In terms of biological role, necessary for the introduction of cis unsaturation into fatty acids. Catalyzes the dehydration of (3R)-3-hydroxydecanoyl-ACP to E-(2)-decenoyl-ACP and then its isomerization to Z-(3)-decenoyl-ACP. Can catalyze the dehydratase reaction for beta-hydroxyacyl-ACPs with saturated chain lengths up to 16:0, being most active on intermediate chain length. The polypeptide is 3-hydroxydecanoyl-[acyl-carrier-protein] dehydratase (Actinobacillus pleuropneumoniae serotype 5b (strain L20)).